A 208-amino-acid chain; its full sequence is Small ribosomal subunit protein uS3 (208 aa).

The region spanning 16-85 (IDEYFKKELS…KPQIDVKPVE (70 aa)) is the KH type-2 domain.

This sequence belongs to the universal ribosomal protein uS3 family. In terms of assembly, part of the 30S ribosomal subunit.

Binds the lower part of the 30S subunit head. This chain is Small ribosomal subunit protein uS3, found in Methanocaldococcus jannaschii (strain ATCC 43067 / DSM 2661 / JAL-1 / JCM 10045 / NBRC 100440) (Methanococcus jannaschii).